A 370-amino-acid polypeptide reads, in one-letter code: Psilocybin cluster transcription regulator (370 aa).

2 disordered regions span residues 1 to 39 and 102 to 221; these read MAPT…ADIS and YQTG…RRRR. Polar residues predominate over residues 143–152; the sequence is IQHQDQQQSG. Residues 183 to 202 are compositionally biased toward low complexity; that stretch reads TSTSTPSGGRRGGRSATMGS. The span at 204–218 shows a compositional bias: basic and acidic residues; the sequence is EWSRQRKDNHKEVER. The basic motif stretch occupies residues 208–221; it reads QRKDNHKEVERRRR. The region spanning 208-258 is the bHLH domain; it reads QRKDNHKEVERRRRGNINEGINELGRIVPSGSGEKAKGAILSRAVQYIHHL. The tract at residues 222-258 is helix-loop-helix motif; it reads GNINEGINELGRIVPSGSGEKAKGAILSRAVQYIHHL. Residues 317 to 370 form a disordered region; it reads VSTAGAGSGAAKDESAAGTKRRSTDGADAAGTNVEGGNNDNAEGERDGKRQRTE. Over residues 359–370 the composition is skewed to basic and acidic residues; it reads EGERDGKRQRTE.

The protein localises to the nucleus. Its function is as follows. Transcription factor that may regulate the expression of the gene cluster that mediates the biosynthesis of psilocybin, a psychotropic tryptamine-derived natural product. The sequence is that of Psilocybin cluster transcription regulator from Psilocybe cyanescens.